The following is a 255-amino-acid chain: Aliphatic sulfonates import ATP-binding protein SsuB (255 aa).

The 222-residue stretch at 12–233 folds into the ABC transporter domain; that stretch reads LLLNAVSKHY…RLGSVRLAEL (222 aa). An ATP-binding site is contributed by 44 to 51; the sequence is GRSGGGKS.

The protein belongs to the ABC transporter superfamily. Aliphatic sulfonates importer (TC 3.A.1.17.2) family. As to quaternary structure, the complex is composed of two ATP-binding proteins (SsuB), two transmembrane proteins (SsuC) and a solute-binding protein (SsuA).

It is found in the cell inner membrane. The catalysed reaction is ATP + H2O + aliphatic sulfonate-[sulfonate-binding protein]Side 1 = ADP + phosphate + aliphatic sulfonateSide 2 + [sulfonate-binding protein]Side 1.. In terms of biological role, part of the ABC transporter complex SsuABC involved in aliphatic sulfonates import. Responsible for energy coupling to the transport system. The protein is Aliphatic sulfonates import ATP-binding protein SsuB of Escherichia coli O6:K15:H31 (strain 536 / UPEC).